A 333-amino-acid polypeptide reads, in one-letter code: MGDWGFLEKLLDQVQEHSTVVGKIWLTVLFIFRILILGLAGESVWGDEQSDFECNTAQPGCTNVCYDQAFPISHIRYWVLQFLFVSTPTLIYLGHVIYLSRREERLRQKEGELRALPSKDLHVERALAAIEHQMAKISVAEDGRLRIRGALMGTYVVSVLCKSVLEAGFLYGQWRLYGWTMEPVFVCQRAPCPHIVDCYVSRPTEKTIFIIFMLVVGVISLVLNLLELVHLLCRCVSREIKARRDHDARPAQGSASDPYPEQVFFYLPMGEGPSSPPCPTYNGLSSTEQNWANLTTEERLTSSRPPPFVNTAPQGGRKSPSRPNSSASKKQYV.

Topologically, residues methionine 1–valine 20 are cytoplasmic. The helical transmembrane segment at valine 21–alanine 40 threads the bilayer. Over glycine 41–arginine 76 the chain is Extracellular. A helical transmembrane segment spans residues tyrosine 77–leucine 99. At serine 100 to arginine 148 the chain is on the cytoplasmic side. The helical transmembrane segment at glycine 149 to tyrosine 171 threads the bilayer. Residues glycine 172–isoleucine 208 are Extracellular-facing. Residues phenylalanine 209 to leucine 231 traverse the membrane as a helical segment. Over leucine 232–valine 333 the chain is Cytoplasmic. The interval alanine 292–valine 333 is disordered. Residues serine 321–valine 333 are compositionally biased toward polar residues.

Belongs to the connexin family. Alpha-type (group II) subfamily. In terms of assembly, a connexon is composed of a hexamer of connexins. Highly expressed in lung.

Its subcellular location is the cell membrane. It localises to the cell junction. The protein resides in the gap junction. Its function is as follows. One gap junction consists of a cluster of closely packed pairs of transmembrane channels, the connexons, through which materials of low MW diffuse from one cell to a neighboring cell. This chain is Gap junction alpha-4 protein (Gja4), found in Mus musculus (Mouse).